The sequence spans 427 residues: Adenylosuccinate synthetase (427 aa).

Residues G12–K18 and G40–T42 contribute to the GTP site. D13 acts as the Proton acceptor in catalysis. Residues D13 and G40 each coordinate Mg(2+). IMP contacts are provided by residues D13–K16, N38–H41, T130, R144, Q224, T239, and R303. H41 serves as the catalytic Proton donor. V299–R305 contributes to the substrate binding site. Residues R305, K331–D333, and S413–G415 each bind GTP.

Belongs to the adenylosuccinate synthetase family. As to quaternary structure, homodimer. It depends on Mg(2+) as a cofactor.

Its subcellular location is the cytoplasm. It catalyses the reaction IMP + L-aspartate + GTP = N(6)-(1,2-dicarboxyethyl)-AMP + GDP + phosphate + 2 H(+). It functions in the pathway purine metabolism; AMP biosynthesis via de novo pathway; AMP from IMP: step 1/2. Functionally, plays an important role in the de novo pathway of purine nucleotide biosynthesis. Catalyzes the first committed step in the biosynthesis of AMP from IMP. In Clostridium novyi (strain NT), this protein is Adenylosuccinate synthetase.